Here is a 398-residue protein sequence, read N- to C-terminus: NADH-quinone oxidoreductase subunit D (398 aa).

It belongs to the complex I 49 kDa subunit family. NDH-1 is composed of 14 different subunits. Subunits NuoB, C, D, E, F, and G constitute the peripheral sector of the complex.

The protein resides in the cell inner membrane. The enzyme catalyses a quinone + NADH + 5 H(+)(in) = a quinol + NAD(+) + 4 H(+)(out). NDH-1 shuttles electrons from NADH, via FMN and iron-sulfur (Fe-S) centers, to quinones in the respiratory chain. The immediate electron acceptor for the enzyme in this species is believed to be ubiquinone. Couples the redox reaction to proton translocation (for every two electrons transferred, four hydrogen ions are translocated across the cytoplasmic membrane), and thus conserves the redox energy in a proton gradient. In Bradyrhizobium diazoefficiens (strain JCM 10833 / BCRC 13528 / IAM 13628 / NBRC 14792 / USDA 110), this protein is NADH-quinone oxidoreductase subunit D.